Consider the following 354-residue polypeptide: Peptide chain release factor 1 (354 aa).

An N5-methylglutamine modification is found at Q230. A disordered region spans residues 282-301 (KQASDAIKKQMIGSGDRSER).

The protein belongs to the prokaryotic/mitochondrial release factor family. Post-translationally, methylated by PrmC. Methylation increases the termination efficiency of RF1.

It is found in the cytoplasm. In terms of biological role, peptide chain release factor 1 directs the termination of translation in response to the peptide chain termination codons UAG and UAA. The protein is Peptide chain release factor 1 of Leptospira borgpetersenii serovar Hardjo-bovis (strain L550).